The primary structure comprises 146 residues: Flavodoxin (146 aa).

Positions Ser-4–Ala-143 constitute a Flavodoxin-like domain.

This sequence belongs to the flavodoxin family. FMN serves as cofactor.

Its function is as follows. Low-potential electron donor to a number of redox enzymes. This is Flavodoxin from Maridesulfovibrio salexigens (strain ATCC 14822 / DSM 2638 / NCIMB 8403 / VKM B-1763) (Desulfovibrio salexigens).